Reading from the N-terminus, the 217-residue chain is Guanylate kinase (217 aa).

Low complexity predominate over residues 1 to 10 (MAVSSTTLSS). Positions 1–30 (MAVSSTTLSSPTPPECLQQQEAPRPPATRG) are disordered. The 179-residue stretch at 30–208 (GRLVVLTGPS…ALQELEALLY (179 aa)) folds into the Guanylate kinase-like domain. Residue 37-44 (GPSGVGKG) participates in ATP binding.

Belongs to the guanylate kinase family.

The protein localises to the cytoplasm. It catalyses the reaction GMP + ATP = GDP + ADP. The catalysed reaction is dZMP + ATP = dZDP + ADP. The protein operates within purine metabolism. Essential for recycling GMP and indirectly, cGMP. Functionally, (Microbial infection) Catalyzes the phosphorylation of dZMP to dZDP, when the bacterium is infected by a phage that produces the substrate for the synthesis of dZTP (2- amino-2'-deoxyadenosine 5'-triphosphate), which is then used by the phage as a DNA polymerase substrate. The sequence is that of Guanylate kinase from Synechococcus sp. (strain JA-3-3Ab) (Cyanobacteria bacterium Yellowstone A-Prime).